Here is a 353-residue protein sequence, read N- to C-terminus: Nicotinate-nucleotide--dimethylbenzimidazole phosphoribosyltransferase (353 aa).

Catalysis depends on Glu-319, which acts as the Proton acceptor.

The protein belongs to the CobT family.

The enzyme catalyses 5,6-dimethylbenzimidazole + nicotinate beta-D-ribonucleotide = alpha-ribazole 5'-phosphate + nicotinate + H(+). It functions in the pathway nucleoside biosynthesis; alpha-ribazole biosynthesis; alpha-ribazole from 5,6-dimethylbenzimidazole: step 1/2. Catalyzes the synthesis of alpha-ribazole-5'-phosphate from nicotinate mononucleotide (NAMN) and 5,6-dimethylbenzimidazole (DMB). The chain is Nicotinate-nucleotide--dimethylbenzimidazole phosphoribosyltransferase from Chlorobaculum parvum (strain DSM 263 / NCIMB 8327) (Chlorobium vibrioforme subsp. thiosulfatophilum).